A 671-amino-acid chain; its full sequence is Sodium, potassium, lithium and rubidium/H(+) antiporter (671 aa).

A run of 11 helical transmembrane segments spans residues 7 to 29 (VLVL…FIPV), 46 to 66 (GLHI…PLLF), 83 to 103 (PILL…GYTI), 110 to 130 (IPLP…VVAV), 156 to 176 (ASGL…AFSI), 182 to 202 (SFVL…FFII), 228 to 248 (FVIY…VVAG), 276 to 296 (IILF…IPDV), 315 to 335 (ILII…LFWA), 364 to 384 (GAVT…GSPF), and 389 to 409 (LIIF…SVLL).

It belongs to the monovalent cation:proton antiporter 1 (CPA1) transporter (TC 2.A.36) family. Nhak (TC 2.A.36.3.2) subfamily.

The protein resides in the cell membrane. Its function is as follows. Transporter involved in the efflux of sodium, potassium, lithium and rubidium. The protein is Sodium, potassium, lithium and rubidium/H(+) antiporter (nhaK) of Bacillus pumilus (strain SAFR-032).